The chain runs to 304 residues: MLGKARELANYQDEPEQLPTGSFGKNAFLRLGFERRPERTVLATLHRRAPLIVQQALYWDEGMPTLPCVSIISNAGGILQGDRYAIEIDLEPDTQAHVTTQSATRIQEMDANFATQTQTQTITLGANSYLEYIPHPIIPHKHSRFVQQTEVTIHPTATLIYSEVLMAGRKYYGTGELFHYDLFSSKFHAAHTDGTSLFTEKFIVEPARGNVSRLGAMGSFHVFGNLILLTPKTHADRLFETIDPVFDMDEGIAWGASRLPNDAGLLFKVLGMESAPVRAAIRKIWEAARQEVTGASLPENFLWA.

The protein belongs to the UreD family. UreD, UreF and UreG form a complex that acts as a GTP-hydrolysis-dependent molecular chaperone, activating the urease apoprotein by helping to assemble the nickel containing metallocenter of UreC. The UreE protein probably delivers the nickel.

The protein localises to the cytoplasm. In terms of biological role, required for maturation of urease via the functional incorporation of the urease nickel metallocenter. Disrupting the ure2 operon has no effect on urease activity or pathogen survival in BALB/c mice when administered orally. This chain is Urease accessory protein UreD 2, found in Brucella abortus (strain 2308).